The chain runs to 378 residues: Erythronate-4-phosphate dehydrogenase (378 aa).

The substrate site is built by Ser45 and Thr66. Positions 146 and 175 each coordinate NAD(+). The active site involves Arg208. Asp232 is an NAD(+) binding site. Glu237 is an active-site residue. Residue His254 is the Proton donor of the active site. Residue Gly257 coordinates NAD(+). Substrate is bound at residue Tyr258.

Belongs to the D-isomer specific 2-hydroxyacid dehydrogenase family. PdxB subfamily. In terms of assembly, homodimer.

The protein resides in the cytoplasm. The catalysed reaction is 4-phospho-D-erythronate + NAD(+) = (R)-3-hydroxy-2-oxo-4-phosphooxybutanoate + NADH + H(+). Its pathway is cofactor biosynthesis; pyridoxine 5'-phosphate biosynthesis; pyridoxine 5'-phosphate from D-erythrose 4-phosphate: step 2/5. Its function is as follows. Catalyzes the oxidation of erythronate-4-phosphate to 3-hydroxy-2-oxo-4-phosphonooxybutanoate. The protein is Erythronate-4-phosphate dehydrogenase of Enterobacter sp. (strain 638).